Consider the following 78-residue polypeptide: Translation initiation factor IF-1 (78 aa).

In terms of domain architecture, S1-like spans 2-78; the sequence is SKNNLNETES…TQARITYRFK (77 aa).

Belongs to the IF-1 family. In terms of assembly, component of the 30S ribosomal translation pre-initiation complex which assembles on the 30S ribosome in the order IF-2 and IF-3, IF-1 and N-formylmethionyl-tRNA(fMet); mRNA recruitment can occur at any time during PIC assembly.

It localises to the cytoplasm. Functionally, one of the essential components for the initiation of protein synthesis. Stabilizes the binding of IF-2 and IF-3 on the 30S subunit to which N-formylmethionyl-tRNA(fMet) subsequently binds. Helps modulate mRNA selection, yielding the 30S pre-initiation complex (PIC). Upon addition of the 50S ribosomal subunit IF-1, IF-2 and IF-3 are released leaving the mature 70S translation initiation complex. The polypeptide is Translation initiation factor IF-1 (Aster yellows witches'-broom phytoplasma (strain AYWB)).